Consider the following 240-residue polypeptide: Uridylate kinase (240 aa).

Residue K12–G15 coordinates ATP. G54 lines the UMP pocket. Positions 55 and 59 each coordinate ATP. Residues D74 and T135 to T142 each bind UMP. T162, Y168, and D171 together coordinate ATP.

The protein belongs to the UMP kinase family. As to quaternary structure, homohexamer.

It localises to the cytoplasm. The enzyme catalyses UMP + ATP = UDP + ADP. It functions in the pathway pyrimidine metabolism; CTP biosynthesis via de novo pathway; UDP from UMP (UMPK route): step 1/1. With respect to regulation, inhibited by UTP. Its function is as follows. Catalyzes the reversible phosphorylation of UMP to UDP. In Xanthomonas axonopodis pv. citri (strain 306), this protein is Uridylate kinase.